A 409-amino-acid chain; its full sequence is Arginine deiminase (409 aa).

Catalysis depends on cysteine 399, which acts as the Amidino-cysteine intermediate.

It belongs to the arginine deiminase family.

The protein localises to the cytoplasm. It carries out the reaction L-arginine + H2O = L-citrulline + NH4(+). Its pathway is amino-acid degradation; L-arginine degradation via ADI pathway; carbamoyl phosphate from L-arginine: step 1/2. This Streptococcus pneumoniae (strain P1031) protein is Arginine deiminase.